The primary structure comprises 264 residues: MKPTTIASLQKCKQNKKRFATITAYDYSFAKLFAEEGLNVMLVGDSLGMTVQGHDSTLPVTVQDIAYHTAAVRRGAPNCLLLADLPFMAYSTPEQAFENAATVMRAGANMVKIEGGAWLVETVRMLTERAVPVCGHLGLTPQSVNIFGGYKVQGRGDEAGDQLLSDALALEAAGAQLLVLECVPVELAKRITEALAIPVIGIGAGNVTDGQILVMHDAFGITGGHIPKFAKNFLAETGDIRAAVRQYIAEVESGVYPGEEHSFH.

Residues D45 and D84 each coordinate Mg(2+). 3-methyl-2-oxobutanoate is bound by residues 45-46 (DS), D84, and K112. E114 is a Mg(2+) binding site. The active-site Proton acceptor is E181.

This sequence belongs to the PanB family. In terms of assembly, homodecamer; pentamer of dimers. Mg(2+) serves as cofactor.

It localises to the cytoplasm. It catalyses the reaction 3-methyl-2-oxobutanoate + (6R)-5,10-methylene-5,6,7,8-tetrahydrofolate + H2O = 2-dehydropantoate + (6S)-5,6,7,8-tetrahydrofolate. The protein operates within cofactor biosynthesis; (R)-pantothenate biosynthesis; (R)-pantoate from 3-methyl-2-oxobutanoate: step 1/2. Functionally, catalyzes the reversible reaction in which hydroxymethyl group from 5,10-methylenetetrahydrofolate is transferred onto alpha-ketoisovalerate to form ketopantoate. This chain is 3-methyl-2-oxobutanoate hydroxymethyltransferase, found in Escherichia fergusonii (strain ATCC 35469 / DSM 13698 / CCUG 18766 / IAM 14443 / JCM 21226 / LMG 7866 / NBRC 102419 / NCTC 12128 / CDC 0568-73).